Consider the following 251-residue polypeptide: Ribonuclease PH (251 aa).

Phosphate is bound by residues arginine 90 and 128-130 (GTR).

The protein belongs to the RNase PH family. In terms of assembly, homohexameric ring arranged as a trimer of dimers.

The catalysed reaction is tRNA(n+1) + phosphate = tRNA(n) + a ribonucleoside 5'-diphosphate. Its function is as follows. Phosphorolytic 3'-5' exoribonuclease that plays an important role in tRNA 3'-end maturation. Removes nucleotide residues following the 3'-CCA terminus of tRNAs; can also add nucleotides to the ends of RNA molecules by using nucleoside diphosphates as substrates, but this may not be physiologically important. Probably plays a role in initiation of 16S rRNA degradation (leading to ribosome degradation) during starvation. The protein is Ribonuclease PH of Leifsonia xyli subsp. xyli (strain CTCB07).